Reading from the N-terminus, the 122-residue chain is Large ribosomal subunit protein uL14 (122 aa).

The protein belongs to the universal ribosomal protein uL14 family. In terms of assembly, part of the 50S ribosomal subunit. Forms a cluster with proteins L3 and L19. In the 70S ribosome, L14 and L19 interact and together make contacts with the 16S rRNA in bridges B5 and B8.

Functionally, binds to 23S rRNA. Forms part of two intersubunit bridges in the 70S ribosome. The protein is Large ribosomal subunit protein uL14 of Bacillus velezensis (strain DSM 23117 / BGSC 10A6 / LMG 26770 / FZB42) (Bacillus amyloliquefaciens subsp. plantarum).